Reading from the N-terminus, the 201-residue chain is dITP/XTP pyrophosphatase (201 aa).

7 to 12 (SNNAHK) contributes to the substrate binding site. Catalysis depends on D72, which acts as the Proton acceptor. Mg(2+) is bound at residue D72. Substrate contacts are provided by residues S73, 154-157 (FGYD), K177, and 182-183 (HR).

It belongs to the HAM1 NTPase family. In terms of assembly, homodimer. The cofactor is Mg(2+).

It carries out the reaction XTP + H2O = XMP + diphosphate + H(+). The enzyme catalyses dITP + H2O = dIMP + diphosphate + H(+). The catalysed reaction is ITP + H2O = IMP + diphosphate + H(+). Pyrophosphatase that catalyzes the hydrolysis of nucleoside triphosphates to their monophosphate derivatives, with a high preference for the non-canonical purine nucleotides XTP (xanthosine triphosphate), dITP (deoxyinosine triphosphate) and ITP. Seems to function as a house-cleaning enzyme that removes non-canonical purine nucleotides from the nucleotide pool, thus preventing their incorporation into DNA/RNA and avoiding chromosomal lesions. The polypeptide is dITP/XTP pyrophosphatase (Leuconostoc mesenteroides subsp. mesenteroides (strain ATCC 8293 / DSM 20343 / BCRC 11652 / CCM 1803 / JCM 6124 / NCDO 523 / NBRC 100496 / NCIMB 8023 / NCTC 12954 / NRRL B-1118 / 37Y)).